A 235-amino-acid polypeptide reads, in one-letter code: MSFKSDNSNSILKNFKRTIIHPNGTNGEFNNNNNINNNNNNNNNNNNNNNNNNNNNSNNNLPIKRKVPESYSQYQYHQQKQVQKQNSQFHKESELNEMELDVEKEYYEQSKDIIGFKRFRSLDSNNNLNSNQFIENNQKSQFFNNNNNNNNNNNNSNNNKNFDQKDNEQEDIIKYMEFLSDIEQLNSDLKESKDNLESISIEMVLLETRLKGLLGLNTLRIIQNDQEQFLFKNKK.

2 disordered regions span residues 20 to 64 (IHPN…LPIK) and 140 to 164 (SQFF…NFDQ). 2 stretches are compositionally biased toward low complexity: residues 30–60 (NNNN…SNNN) and 140–161 (SQFF…NNKN). A coiled-coil region spans residues 174–213 (KYMEFLSDIEQLNSDLKESKDNLESISIEMVLLETRLKGL).

This is an uncharacterized protein from Dictyostelium discoideum (Social amoeba).